The chain runs to 100 residues: Urease subunit gamma (100 aa).

It belongs to the urease gamma subunit family. In terms of assembly, heterotrimer of UreA (gamma), UreB (beta) and UreC (alpha) subunits. Three heterotrimers associate to form the active enzyme.

It is found in the cytoplasm. The enzyme catalyses urea + 2 H2O + H(+) = hydrogencarbonate + 2 NH4(+). The protein operates within nitrogen metabolism; urea degradation; CO(2) and NH(3) from urea (urease route): step 1/1. The chain is Urease subunit gamma from Mycobacterium sp. (strain JLS).